The chain runs to 122 residues: ATP-dependent Clp protease adapter protein ClpS (122 aa).

A disordered region spans residues 1–27 (MVRMATKPPSMTPTPPTGAPPRDDGGS). The span at 10 to 19 (SMTPTPPTGA) shows a compositional bias: pro residues.

The protein belongs to the ClpS family. Binds to the N-terminal domain of the chaperone ClpA.

Involved in the modulation of the specificity of the ClpAP-mediated ATP-dependent protein degradation. This is ATP-dependent Clp protease adapter protein ClpS from Paracidovorax citrulli (strain AAC00-1) (Acidovorax citrulli).